The sequence spans 321 residues: tRNA U34 carboxymethyltransferase (321 aa).

Carboxy-S-adenosyl-L-methionine is bound by residues Lys90, Trp104, Lys109, Gly129, 151-153, 180-181, Met195, Tyr199, and Arg314; these read DPT and IE.

It belongs to the class I-like SAM-binding methyltransferase superfamily. CmoB family. As to quaternary structure, homotetramer.

The catalysed reaction is carboxy-S-adenosyl-L-methionine + 5-hydroxyuridine(34) in tRNA = 5-carboxymethoxyuridine(34) in tRNA + S-adenosyl-L-homocysteine + H(+). Catalyzes carboxymethyl transfer from carboxy-S-adenosyl-L-methionine (Cx-SAM) to 5-hydroxyuridine (ho5U) to form 5-carboxymethoxyuridine (cmo5U) at position 34 in tRNAs. This Histophilus somni (strain 129Pt) (Haemophilus somnus) protein is tRNA U34 carboxymethyltransferase.